The following is a 599-amino-acid chain: DNA mismatch repair protein MutL (599 aa).

This sequence belongs to the DNA mismatch repair MutL/HexB family.

Functionally, this protein is involved in the repair of mismatches in DNA. It is required for dam-dependent methyl-directed DNA mismatch repair. May act as a 'molecular matchmaker', a protein that promotes the formation of a stable complex between two or more DNA-binding proteins in an ATP-dependent manner without itself being part of a final effector complex. The protein is DNA mismatch repair protein MutL of Rhodopseudomonas palustris (strain BisB18).